The primary structure comprises 603 residues: Autophagy-related protein 13a (603 aa).

S248 is modified (phosphoserine). Disordered stretches follow at residues 258–477 and 498–518; these read PSPG…DDLD and SHSLDRRKTSSSISQSLPLGR. A compositionally biased stretch (polar residues) spans 301-315; the sequence is ATPNQSFSPAQSHQL. Over residues 320-331 the composition is skewed to basic and acidic residues; the sequence is HDFHWSRTDAFG. Polar residues-rich tracts occupy residues 371–386 and 419–437; these read IPSSATLNRYVSSNFS and SSRSGESPSGLMNQYPTQK. Over residues 453–473 the composition is skewed to low complexity; the sequence is LSSSDSPRFAFSRSPSRLSSQ.

It belongs to the ATG13 family. Plant subfamily. As to quaternary structure, interacts with ATG1A. Interacts with ATG11 and ATG101. In terms of processing, phosphorylated during nutrient starvation. Dephosphorylated in nutrient-rich conditions.

Its subcellular location is the cytoplasmic vesicle. It is found in the autophagosome. Functionally, involved in autophagy in a nutritional condition dependent manner. The ATG1-ATG13 protein kinase complex regulates downstream events required for autophagosome enclosure and/or vacuolar delivery. Becomes a target of autophagy under nutrient starvation. Connects autophagy to plant nutritional status. This Arabidopsis thaliana (Mouse-ear cress) protein is Autophagy-related protein 13a.